We begin with the raw amino-acid sequence, 438 residues long: MAATTTIPLLLLLLAATVAAAAAELSVYHNVHPSSPSPLESIIALARDDDARLLFLSSKAATAGVSSAPVASGQAPPSYVVRAGLGSPSQQLLLALDTSADATWAHCSPCGTCPSSSLFAPANSSSYASLPCSSSWCPLFQGQACPAPQGGGDAAPPPATLPTCAFSKPFADASFQAALASDTLRLGKDAIPNYTFGCVSSVTGPTTNMPRQGLLGLGRGPMALLSQAGSLYNGVFSYCLPSYRSYYFSGSLRLGAGGGQPRSVRYTPMLRNPHRSSLYYVNVTGLSVGHAWVKVPAGSFAFDAATGAGTVVDSGTVITRWTAPVYAALREEFRRQVAAPSGYTSLGAFDTCFNTDEVAAGGAPAVTVHMDGGVDLALPMENTLIHSSATPLACLAMAEAPQNVNSVVNVIANLQQQNIRVVFDVANSRVGFAKESCN.

The first 23 residues, 1-23 (MAATTTIPLLLLLLAATVAAAAA), serve as a signal peptide directing secretion. One can recognise a Peptidase A1 domain in the interval 79-433 (YVVRAGLGSP…DVANSRVGFA (355 aa)). D97 is an active-site residue. An intrachain disulfide couples C107 to C113. N123, N193, and N282 each carry an N-linked (GlcNAc...) asparagine glycan. D313 is a catalytic residue. C352 and C394 are disulfide-bonded.

This sequence belongs to the peptidase A1 family.

Anther-specific aspartic protease involved in tapetal programmed cell death (PCD). Directly regulated by the transcription factor EAT1/DTD in anthers during tapetum PCD and degeneration. This chain is Aspartyl protease 25, found in Oryza sativa subsp. japonica (Rice).